Consider the following 56-residue polypeptide: uncharacterized protein (56 aa).

This is an uncharacterized protein from Dictyostelium discoideum (Social amoeba).